A 217-amino-acid chain; its full sequence is Cytochrome c biogenesis ATP-binding export protein CcmA (217 aa).

An ABC transporter domain is found at 6-215; sequence FSAKNLACVR…HLDQFAVAEE (210 aa). ATP is bound at residue 38–45; that stretch reads GPNGSGKS.

Belongs to the ABC transporter superfamily. CcmA exporter (TC 3.A.1.107) family. The complex is composed of two ATP-binding proteins (CcmA) and two transmembrane proteins (CcmB).

It is found in the cell inner membrane. It carries out the reaction heme b(in) + ATP + H2O = heme b(out) + ADP + phosphate + H(+). Part of the ABC transporter complex CcmAB involved in the biogenesis of c-type cytochromes; once thought to export heme, this seems not to be the case, but its exact role is uncertain. Responsible for energy coupling to the transport system. The sequence is that of Cytochrome c biogenesis ATP-binding export protein CcmA from Paramagnetospirillum magneticum (strain ATCC 700264 / AMB-1) (Magnetospirillum magneticum).